The chain runs to 288 residues: Bifunctional protein FolD (288 aa).

Residues 163-165 (GRS), serine 188, and isoleucine 229 contribute to the NADP(+) site.

The protein belongs to the tetrahydrofolate dehydrogenase/cyclohydrolase family. In terms of assembly, homodimer.

The catalysed reaction is (6R)-5,10-methylene-5,6,7,8-tetrahydrofolate + NADP(+) = (6R)-5,10-methenyltetrahydrofolate + NADPH. The enzyme catalyses (6R)-5,10-methenyltetrahydrofolate + H2O = (6R)-10-formyltetrahydrofolate + H(+). The protein operates within one-carbon metabolism; tetrahydrofolate interconversion. Catalyzes the oxidation of 5,10-methylenetetrahydrofolate to 5,10-methenyltetrahydrofolate and then the hydrolysis of 5,10-methenyltetrahydrofolate to 10-formyltetrahydrofolate. This is Bifunctional protein FolD from Campylobacter curvus (strain 525.92).